Reading from the N-terminus, the 179-residue chain is Large ribosomal subunit protein uL6 (179 aa).

Belongs to the universal ribosomal protein uL6 family. As to quaternary structure, part of the 50S ribosomal subunit.

Its function is as follows. This protein binds to the 23S rRNA, and is important in its secondary structure. It is located near the subunit interface in the base of the L7/L12 stalk, and near the tRNA binding site of the peptidyltransferase center. The protein is Large ribosomal subunit protein uL6 of Syntrophomonas wolfei subsp. wolfei (strain DSM 2245B / Goettingen).